A 213-amino-acid polypeptide reads, in one-letter code: Uridine kinase (213 aa).

15–22 (GASASGKS) serves as a coordination point for ATP.

It belongs to the uridine kinase family.

The protein localises to the cytoplasm. The catalysed reaction is uridine + ATP = UMP + ADP + H(+). It carries out the reaction cytidine + ATP = CMP + ADP + H(+). Its pathway is pyrimidine metabolism; CTP biosynthesis via salvage pathway; CTP from cytidine: step 1/3. It participates in pyrimidine metabolism; UMP biosynthesis via salvage pathway; UMP from uridine: step 1/1. The polypeptide is Uridine kinase (Pectobacterium atrosepticum (strain SCRI 1043 / ATCC BAA-672) (Erwinia carotovora subsp. atroseptica)).